We begin with the raw amino-acid sequence, 716 residues long: Protein C-mannosyl-transferase DPY19L3 (716 aa).

At 1-43 (MMSIRQRREIRATEVSEDFPAQEENVKLENKLPSGCTSRRLWK) the chain is on the cytoplasmic side. The chain crosses the membrane as a helical span at residues 44-64 (ILSLTIGGTIALCIGLLTSVY). Residues 65 to 154 (LATLHENDLW…RVLPIQKYLE (90 aa)) are Lumenal-facing. An N-linked (GlcNAc...) asparagine glycan is attached at Asn118. The chain crosses the membrane as a helical span at residues 155 to 182 (PVYFYIYTLFGLQAIYVTALYITSWLLS). The Cytoplasmic portion of the chain corresponds to 183 to 184 (GT). Residues 185-197 (WLSGLLAAFWYVT) constitute an intramembrane region (name=3). Residues 198 to 215 (NRIDTTRVEFTIPLRENW) lie on the Cytoplasmic side of the membrane. Positions 216–230 (ALPFFAIQIAAITYF) form an intramembrane region, name=4. Over 231-239 (LRPNLQPLS) the chain is Cytoplasmic. Residues 240-256 (ERLTLLAIFISTFLFSL) traverse the membrane as a helical segment. The Lumenal portion of the chain corresponds to 257-262 (TWQFNQ). A helical membrane pass occupies residues 263-279 (FMMLMQALVLFTLDSLD). The Cytoplasmic segment spans residues 280-289 (MLPAVKATWL). Residues 290-306 (YGIQITSLLLVCILQFF) form a helical membrane-spanning segment. The Lumenal segment spans residues 307-308 (NS). Residues 309-323 (MILGSLLISFNLSVF) form a helical membrane-spanning segment. The Cytoplasmic portion of the chain corresponds to 324-338 (IARKLQKNLKTGSFL). The helical transmembrane segment at 339–359 (NRLGKLLLHLFMVLCLTLFLN) threads the bilayer. The Lumenal segment spans residues 360 to 414 (NIIKKILNLKSDEHIFKFLKAKFGLGATRDFDANLYLCEEAFGLLPFNTFGRLSD). A helical membrane pass occupies residues 415–437 (TLLFYAYIFVLSITVIVAFVVAF). The Cytoplasmic segment spans residues 438 to 465 (HNLSDSTNQQSVGKMEKGTVDLKPETAY). The chain crosses the membrane as a helical span at residues 466 to 485 (NLIHTILFGFLALSTMRMKY). Topologically, residues 486-487 (LW) are lumenal. Residues 488-499 (TSHMCVFASFGL) form a helical membrane-spanning segment. Residues 500 to 522 (CSPEIWELLLKSVHLYNPKRICI) lie on the Cytoplasmic side of the membrane. A helical membrane pass occupies residues 523–539 (MRYSVPILILLYLCYKF). Over 540 to 716 (WPGMMDELSE…FHVYKLSRNK (177 aa)) the chain is Lumenal. N-linked (GlcNAc...) asparagine glycosylation occurs at Asn704.

Belongs to the dpy-19 family. As to expression, widely expressed.

The protein resides in the endoplasmic reticulum membrane. It carries out the reaction L-tryptophyl-[protein] + a di-trans,poly-cis-dolichyl beta-D-mannosyl phosphate = C-alpha-D-mannosyl-L-tryptophyl-[protein] + a di-trans,poly-cis-dolichyl phosphate + H(+). It participates in protein modification; protein glycosylation. Functionally, C-mannosyltransferase that mediates C-mannosylation of tryptophan residues on target proteins. The reaction occurs on the luminal side of the endoplasmic reticulum and involves the transfer of a mannose unit from a dolichylphosphate mannose (Dol-P-Man) donor to an acceptor protein containing a WxxW or WxxC consensus sequence. C-mannosylates RSPO1, a Wnt signaling regulator, preferentially at the first Trp residue in the sequence WxxW. C-mannosylates the netrin receptor UNC5A, preferentially at the third tryptophan of WxxWxxWxxC sequence. Its function is as follows. Has no C-mannosyltransferase activity. This is Protein C-mannosyl-transferase DPY19L3 (DPY19L3) from Homo sapiens (Human).